A 125-amino-acid chain; its full sequence is Small ribosomal subunit protein eS25 (125 aa).

Residues 1–23 (MPPKDDKKKKDAGKSAKKDKDPV) show a composition bias toward basic and acidic residues. The interval 1–38 (MPPKDDKKKKDAGKSAKKDKDPVNKSGGKAKKKKWSKG) is disordered. A compositionally biased stretch (basic residues) spans 28 to 38 (GKAKKKKWSKG). At Lys-43 the chain carries N6-acetyllysine. Residue Lys-52 is modified to N6-acetyllysine; alternate. Lys-52 is subject to N6-succinyllysine; alternate. N6-acetyllysine occurs at positions 60 and 66. Lys-94 is modified (N6-acetyllysine; alternate). Lys-94 bears the N6-succinyllysine; alternate mark.

Belongs to the eukaryotic ribosomal protein eS25 family. In terms of assembly, component of the small ribosomal subunit.

The protein localises to the cytoplasm. Functionally, component of the small ribosomal subunit. The ribosome is a large ribonucleoprotein complex responsible for the synthesis of proteins in the cell. The chain is Small ribosomal subunit protein eS25 (RPS25) from Homo sapiens (Human).